The sequence spans 84 residues: uncharacterized protein (84 aa).

A helical membrane pass occupies residues Ala10 to His32.

It localises to the membrane. This is an uncharacterized protein from Saccharomyces cerevisiae (strain ATCC 204508 / S288c) (Baker's yeast).